A 555-amino-acid chain; its full sequence is MSSLTPELRQSILEHLGFLYGERAPAVLGRLEEICSGFPAQRREGGWSEKDALLITYGDQIHAEGEPPLQTLYDFLYERLRGVFSGVHLLPFYPSTSDDGFSVVDFQRVDPELGTWTDIRIIAQDFRLMADLVCNHVSASSPWFQGFLQDDPQYQGFFITVDPGTDLSTVFRPRALPLLTPFQTPSGEKLVWTTFSPDQTDLNYANPEVLLEVIEALLCYVRNGAGLIRLDAVGFIWKEIGTSCMHLEGAHRIVKLMRLVLDAVAPHVLLVSETNAPHRENISYFGNGHDEAQLVYQFPLPPLVMHTFRTGDASKLAGWAAGLTLPSERTTFFNFLASHDGIGVVPAGGILQPEEIAALVRQALEHGGRVNHKDTPDGPVPYELCLTLFDALSNPNSDEAEDLKIARFLAANVILLSLQGIPGVYIHSLFGSPSDHAGFEESGIPRRLNRHKFTKAELEERLADPASRAAKILAAYSHLLRVRSMHPAFHPNAPQRILPSTEVLRIVRGEGDQAVGCYINVTDRPQVVSRIGKNLITGQWFTGVLKPYQAAWIID.

The Nucleophile role is filled by Asp231.

The protein belongs to the glycosyl hydrolase 13 family. Glucosylglycerate phosphorylase subfamily.

The enzyme catalyses (2R)-2-O-(alpha-D-glucopyranosyl)-glycerate + phosphate = (R)-glycerate + alpha-D-glucose 1-phosphate. In terms of biological role, catalyzes the reversible phosphorolysis of glucosylglycerate into alpha-D-glucose 1-phosphate (Glc1P) and D-glycerate. May be a regulator of intracellular levels of glucosylglycerate, a compatible solute that primarily protects organisms facing salt stress and very specific nutritional constraints. Has a very strict substrate specificity. Cannot catalyze the phosphorolysis of sucrose or synthesize sucrose from Glc1P and D-fructose. This is Glucosylglycerate phosphorylase from Allomeiothermus silvanus (strain ATCC 700542 / DSM 9946 / NBRC 106475 / NCIMB 13440 / VI-R2) (Thermus silvanus).